Consider the following 86-residue polypeptide: Large ribosomal subunit protein bL27 (86 aa).

Gly residues predominate over residues 1–10 (MAQKKGGGST). A disordered region spans residues 1 to 22 (MAQKKGGGSTRNGRDSESKRLG).

Belongs to the bacterial ribosomal protein bL27 family.

In Polynucleobacter asymbioticus (strain DSM 18221 / CIP 109841 / QLW-P1DMWA-1) (Polynucleobacter necessarius subsp. asymbioticus), this protein is Large ribosomal subunit protein bL27.